We begin with the raw amino-acid sequence, 103 residues long: Co-chaperonin GroES (103 aa).

This sequence belongs to the GroES chaperonin family. As to quaternary structure, heptamer of 7 subunits arranged in a ring. Interacts with the chaperonin GroEL.

The protein localises to the cytoplasm. In terms of biological role, together with the chaperonin GroEL, plays an essential role in assisting protein folding. The GroEL-GroES system forms a nano-cage that allows encapsulation of the non-native substrate proteins and provides a physical environment optimized to promote and accelerate protein folding. GroES binds to the apical surface of the GroEL ring, thereby capping the opening of the GroEL channel. The polypeptide is Co-chaperonin GroES (Microcystis aeruginosa (strain NIES-843 / IAM M-2473)).